Reading from the N-terminus, the 466-residue chain is Soluble pyridine nucleotide transhydrogenase (466 aa).

FAD is bound at residue 36–45 (EKESSVGGGC).

This sequence belongs to the class-I pyridine nucleotide-disulfide oxidoreductase family. The cofactor is FAD.

The protein localises to the cytoplasm. It carries out the reaction NAD(+) + NADPH = NADH + NADP(+). Conversion of NADPH, generated by peripheral catabolic pathways, to NADH, which can enter the respiratory chain for energy generation. This Vibrio vulnificus (strain CMCP6) protein is Soluble pyridine nucleotide transhydrogenase.